A 473-amino-acid polypeptide reads, in one-letter code: ATP synthase subunit beta (473 aa).

Residue 158 to 165 (GGAGVGKT) coordinates ATP.

The protein belongs to the ATPase alpha/beta chains family. F-type ATPases have 2 components, CF(1) - the catalytic core - and CF(0) - the membrane proton channel. CF(1) has five subunits: alpha(3), beta(3), gamma(1), delta(1), epsilon(1). CF(0) has three main subunits: a(1), b(2) and c(9-12). The alpha and beta chains form an alternating ring which encloses part of the gamma chain. CF(1) is attached to CF(0) by a central stalk formed by the gamma and epsilon chains, while a peripheral stalk is formed by the delta and b chains.

It is found in the cell membrane. The catalysed reaction is ATP + H2O + 4 H(+)(in) = ADP + phosphate + 5 H(+)(out). In terms of biological role, produces ATP from ADP in the presence of a proton gradient across the membrane. The catalytic sites are hosted primarily by the beta subunits. In Geobacillus thermodenitrificans (strain NG80-2), this protein is ATP synthase subunit beta.